We begin with the raw amino-acid sequence, 351 residues long: DNA polymerase IV (351 aa).

The UmuC domain maps to 4–185 (IIHVDMDCFF…LPLEKIPGVG (182 aa)). Mg(2+) contacts are provided by aspartate 8 and aspartate 103. The active site involves glutamate 104.

This sequence belongs to the DNA polymerase type-Y family. As to quaternary structure, monomer. Mg(2+) is required as a cofactor.

Its subcellular location is the cytoplasm. The enzyme catalyses DNA(n) + a 2'-deoxyribonucleoside 5'-triphosphate = DNA(n+1) + diphosphate. Functionally, poorly processive, error-prone DNA polymerase involved in untargeted mutagenesis. Copies undamaged DNA at stalled replication forks, which arise in vivo from mismatched or misaligned primer ends. These misaligned primers can be extended by PolIV. Exhibits no 3'-5' exonuclease (proofreading) activity. May be involved in translesional synthesis, in conjunction with the beta clamp from PolIII. This chain is DNA polymerase IV, found in Shigella flexneri.